Here is a 713-residue protein sequence, read N- to C-terminus: Polyribonucleotide nucleotidyltransferase (713 aa).

2 residues coordinate Mg(2+): Asp-498 and Asp-504. Residues 565 to 631 form the KH domain; that stretch reads PRILSLKVPV…RIEDLTREAK (67 aa). An S1 motif domain is found at 633 to 701; it reads GEIYEGTVTR…ERGKIDLIRP (69 aa).

This sequence belongs to the polyribonucleotide nucleotidyltransferase family. Requires Mg(2+) as cofactor.

The protein localises to the cytoplasm. The enzyme catalyses RNA(n+1) + phosphate = RNA(n) + a ribonucleoside 5'-diphosphate. In terms of biological role, involved in mRNA degradation. Catalyzes the phosphorolysis of single-stranded polyribonucleotides processively in the 3'- to 5'-direction. This is Polyribonucleotide nucleotidyltransferase from Thermus thermophilus (strain ATCC 27634 / DSM 579 / HB8).